The primary structure comprises 304 residues: Thyroxine 5-deiodinase (304 aa).

Residues 1–22 (MPRQAASRLVVGEGEGPPGASG) are disordered. At 1-44 (MPRQAASRLVVGEGEGPPGASGPAATMLRSLLLHSLRLCAQTAS) the chain is on the cytoplasmic side. The chain crosses the membrane as a helical; Signal-anchor for type II membrane protein span at residues 45 to 67 (CLVLFPRFLGTAFMLWLLDFLCI). At 68–304 (RKHFLRRRHP…QLHGTRPHRF (237 aa)) the chain is on the extracellular side. Residue U170 is part of the active site. Position 170 (U170) is a non-standard amino acid, selenocysteine.

Belongs to the iodothyronine deiodinase family. Monomer. Homodimer. May undergo minor heretodimerization with DIO1 and DIO2.

Its subcellular location is the cell membrane. The protein localises to the endosome membrane. It catalyses the reaction 3,3',5'-triiodo-L-thyronine + iodide + A + H(+) = L-thyroxine + AH2. The catalysed reaction is 3,3'-diiodo-L-thyronine + iodide + A + H(+) = 3,3',5-triiodo-L-thyronine + AH2. It carries out the reaction 3-iodo-L-thyronine + iodide + A + H(+) = 3,5-diiodo-L-thyronine + AH2. The enzyme catalyses L-thyronine + iodide + A + H(+) = 3-iodo-L-thyronine + AH2. It catalyses the reaction 3',5'-diiodo-L-thyronine + iodide + A + H(+) = 3,3',5'-triiodo-L-thyronine + AH2. The catalysed reaction is 3'-iodo-L-thyronine + iodide + A + H(+) = 3,3'-diiodo-L-thyronine + AH2. It carries out the reaction 3,3',5'-triiodothyronamine + iodide + A + H(+) = 3,3',5,5'-tetraiodothyronamine + AH2. The enzyme catalyses 3',5'-diiodothyronamine + iodide + A + H(+) = 3,3',5'-triiodothyronamine + AH2. It catalyses the reaction 3,3'-diiodothyronamine + iodide + A + H(+) = 3,3',5-triiodothyronamine + AH2. The catalysed reaction is 3-iodothyronamine + iodide + A + H(+) = 3,5-diiodothyronamine + AH2. It carries out the reaction 3'-iodothyronamine + iodide + A + H(+) = 3,3'-diiodothyronamine + AH2. The enzyme catalyses thyronamine + iodide + A + H(+) = 3-iodothyronamine + AH2. Functionally, plays a crucial role in the metabolism of thyroid hormones (TH) and has specific roles in TH activation and inactivation by deiodination. Catalyzes the deiodination of L-thyroxine (T4) to 3,3',5'-triiodothyronine (rT3), 3,5,3'-triiodothyronine (T3) to 3,3'-diiodothyronine (3,3'-T2), 3,5-diiodothyronine (3,5-T2) to 3-monoiodothyronine (3-T1), rT3 to 3',5'-diiodothyronine (3',5'-T2) and 3,3'-T2 to 3'-monoiodothyronine (3'-T1) via inner-ring deiodination (IRD). Catalyzes the deiodination of 3-T1 to L-thyronine (T0) via outer-ring deiodination (ORD). Catalyzes the tyrosyl ring deiodinations of 3,3',5,5'-tetraiodothyronamine, 3,3',5'-triiodothyronamine, 3,5,3'-triiodothyronamine, 3,5-diiodothyronamine, 3,3'-diiodothyronamine and 3-iodothyronamine. This is Thyroxine 5-deiodinase (Dio3) from Mus musculus (Mouse).